The chain runs to 358 residues: Magnesium-protoporphyrin IX monomethyl ester [oxidative] cyclase 2 (358 aa).

The protein belongs to the AcsF family. It depends on Fe cation as a cofactor.

It catalyses the reaction Mg-protoporphyrin IX 13-monomethyl ester + 3 NADPH + 3 O2 + 2 H(+) = 3,8-divinyl protochlorophyllide a + 3 NADP(+) + 5 H2O. The protein operates within porphyrin-containing compound metabolism; chlorophyll biosynthesis (light-independent). Catalyzes the formation of the isocyclic ring in chlorophyll biosynthesis. Mediates the cyclase reaction, which results in the formation of divinylprotochlorophyllide (Pchlide) characteristic of all chlorophylls from magnesium-protoporphyrin IX 13-monomethyl ester (MgPMME). The polypeptide is Magnesium-protoporphyrin IX monomethyl ester [oxidative] cyclase 2 (Synechocystis sp. (strain ATCC 27184 / PCC 6803 / Kazusa)).